The chain runs to 243 residues: Phosphoribosyl isomerase A (243 aa).

The Proton acceptor role is filled by Asp-9. The active-site Proton donor is Asp-128.

It belongs to the HisA/HisF family.

It is found in the cytoplasm. The enzyme catalyses 1-(5-phospho-beta-D-ribosyl)-5-[(5-phospho-beta-D-ribosylamino)methylideneamino]imidazole-4-carboxamide = 5-[(5-phospho-1-deoxy-D-ribulos-1-ylimino)methylamino]-1-(5-phospho-beta-D-ribosyl)imidazole-4-carboxamide. It catalyses the reaction N-(5-phospho-beta-D-ribosyl)anthranilate = 1-(2-carboxyphenylamino)-1-deoxy-D-ribulose 5-phosphate. Its pathway is amino-acid biosynthesis; L-histidine biosynthesis; L-histidine from 5-phospho-alpha-D-ribose 1-diphosphate: step 4/9. It participates in amino-acid biosynthesis; L-tryptophan biosynthesis; L-tryptophan from chorismate: step 3/5. Its function is as follows. Involved in both the histidine and tryptophan biosynthetic pathways. In Mycobacterium avium (strain 104), this protein is Phosphoribosyl isomerase A.